The primary structure comprises 418 residues: D-amino acid dehydrogenase (418 aa).

3–17 (VLVLGAGVVGTTSAW) lines the FAD pocket.

Belongs to the DadA oxidoreductase family. The cofactor is FAD.

The catalysed reaction is a D-alpha-amino acid + A + H2O = a 2-oxocarboxylate + AH2 + NH4(+). The protein operates within amino-acid degradation; D-alanine degradation; NH(3) and pyruvate from D-alanine: step 1/1. Oxidative deamination of D-amino acids. The chain is D-amino acid dehydrogenase from Dechloromonas aromatica (strain RCB).